A 263-amino-acid polypeptide reads, in one-letter code: 3-methyl-2-oxobutanoate hydroxymethyltransferase (263 aa).

Positions 43 and 82 each coordinate Mg(2+). Residues Asp43–Ser44, Asp82, and Lys111 each bind 3-methyl-2-oxobutanoate. Mg(2+) is bound at residue Glu113. The active-site Proton acceptor is the Glu179.

It belongs to the PanB family. As to quaternary structure, homodecamer; pentamer of dimers. Mg(2+) is required as a cofactor.

The protein localises to the cytoplasm. The catalysed reaction is 3-methyl-2-oxobutanoate + (6R)-5,10-methylene-5,6,7,8-tetrahydrofolate + H2O = 2-dehydropantoate + (6S)-5,6,7,8-tetrahydrofolate. It participates in cofactor biosynthesis; (R)-pantothenate biosynthesis; (R)-pantoate from 3-methyl-2-oxobutanoate: step 1/2. Its function is as follows. Catalyzes the reversible reaction in which hydroxymethyl group from 5,10-methylenetetrahydrofolate is transferred onto alpha-ketoisovalerate to form ketopantoate. The chain is 3-methyl-2-oxobutanoate hydroxymethyltransferase from Neisseria gonorrhoeae (strain ATCC 700825 / FA 1090).